The following is a 442-amino-acid chain: tRNA-2-methylthio-N(6)-dimethylallyladenosine synthase (442 aa).

An MTTase N-terminal domain is found at 2-120 (KKVFIRTFGC…LPKMIVDKET (119 aa)). Residues cysteine 11, cysteine 49, cysteine 83, cysteine 157, cysteine 161, and cysteine 164 each contribute to the [4Fe-4S] cluster site. The region spanning 143–375 (RVEGGAAFVS…NEVIEAETAR (233 aa)) is the Radical SAM core domain. Residues 378–441 (QTMIGTVQRC…TFSLRGKIVE (64 aa)) form the TRAM domain.

This sequence belongs to the methylthiotransferase family. MiaB subfamily. As to quaternary structure, monomer. [4Fe-4S] cluster is required as a cofactor.

Its subcellular location is the cytoplasm. The catalysed reaction is N(6)-dimethylallyladenosine(37) in tRNA + (sulfur carrier)-SH + AH2 + 2 S-adenosyl-L-methionine = 2-methylsulfanyl-N(6)-dimethylallyladenosine(37) in tRNA + (sulfur carrier)-H + 5'-deoxyadenosine + L-methionine + A + S-adenosyl-L-homocysteine + 2 H(+). In terms of biological role, catalyzes the methylthiolation of N6-(dimethylallyl)adenosine (i(6)A), leading to the formation of 2-methylthio-N6-(dimethylallyl)adenosine (ms(2)i(6)A) at position 37 in tRNAs that read codons beginning with uridine. The sequence is that of tRNA-2-methylthio-N(6)-dimethylallyladenosine synthase from Neisseria meningitidis serogroup A / serotype 4A (strain DSM 15465 / Z2491).